A 363-amino-acid chain; its full sequence is S-adenosylmethionine:tRNA ribosyltransferase-isomerase (363 aa).

It belongs to the QueA family. As to quaternary structure, monomer.

Its subcellular location is the cytoplasm. The catalysed reaction is 7-aminomethyl-7-carbaguanosine(34) in tRNA + S-adenosyl-L-methionine = epoxyqueuosine(34) in tRNA + adenine + L-methionine + 2 H(+). Its pathway is tRNA modification; tRNA-queuosine biosynthesis. Transfers and isomerizes the ribose moiety from AdoMet to the 7-aminomethyl group of 7-deazaguanine (preQ1-tRNA) to give epoxyqueuosine (oQ-tRNA). This chain is S-adenosylmethionine:tRNA ribosyltransferase-isomerase, found in Mannheimia succiniciproducens (strain KCTC 0769BP / MBEL55E).